We begin with the raw amino-acid sequence, 68 residues long: Phycobilisome 7.8 kDa linker polypeptide, allophycocyanin-associated, core (68 aa).

Residues 2 to 57 enclose the CpcD-like domain; that stretch reads SRLFKITALVPSLSRTRTQRELQNTYFTKLVPYENWFREQQRIQKAGGKIIKVELA.

It belongs to the phycobilisome linker protein family.

It is found in the cellular thylakoid membrane. Its function is as follows. Rod linker protein, associated with allophycocyanin. Linker polypeptides determine the state of aggregation and the location of the disk-shaped phycobiliprotein units within the phycobilisome and modulate their spectroscopic properties in order to mediate a directed and optimal energy transfer. The polypeptide is Phycobilisome 7.8 kDa linker polypeptide, allophycocyanin-associated, core (apcC) (Nostoc sp. (strain PCC 7120 / SAG 25.82 / UTEX 2576)).